Reading from the N-terminus, the 372-residue chain is MLRSMWNFLKRHKKKCIFLGTVLGGVYILGKYGQKKLREIQEREAAEYIAQARRQYHFESNQRTCNMTVLSMLPTLREALMQQLNSESLTALLKNRPSNKLEIWEDLKIISFTRSIVAVYSTCMLVVLLRVQLNIIGGYIYLDNATVGKNGTSILAPPDVQQQYLSSIQHLLGDGLTELVTVIKQAVQRILGSISLKHSLSLLDLEQKLKEIRTLVEQHRSCWNDKDASKSSLCHYMMPDEETPLAAQAYGLSPRDITTIKLLNETRDMLESPDFSTVLNTCLNRGFSRLLDNMAEFFRPTEQDLQHGNSINSLSSVSLPLAKIIPIVNGQIHSVCSETPSHFVQDLLMMEQVKDFAANVYEAFSTPQQLEK.

The Cytoplasmic portion of the chain corresponds to 1–15 (MLRSMWNFLKRHKKK). The interval 1–45 (MLRSMWNFLKRHKKKCIFLGTVLGGVYILGKYGQKKLREIQEREA) is targeting to peroxisomes. Residues 16 to 36 (CIFLGTVLGGVYILGKYGQKK) form a helical membrane-spanning segment. Topologically, residues 37–116 (LREIQEREAA…LKIISFTRSI (80 aa)) are peroxisomal. A helical transmembrane segment spans residues 117 to 140 (VAVYSTCMLVVLLRVQLNIIGGYI). The tract at residues 120-136 (YSTCMLVVLLRVQLNII) is interaction with PEX19. Residues 141-372 (YLDNATVGKN…AFSTPQQLEK (232 aa)) lie on the Cytoplasmic side of the membrane.

It belongs to the peroxin-3 family. In terms of assembly, interacts with PEX19.

It localises to the peroxisome membrane. Involved in peroxisome biosynthesis and integrity. Assembles membrane vesicles before the matrix proteins are translocated. As a docking factor for PEX19, is necessary for the import of peroxisomal membrane proteins in the peroxisomes. The protein is Peroxisomal biogenesis factor 3 (Pex3) of Rattus norvegicus (Rat).